The chain runs to 332 residues: Adenosine deaminase (332 aa).

Positions 12 and 14 each coordinate Zn(2+). H14, D16, and G170 together coordinate substrate. H197 is a Zn(2+) binding site. The Proton donor role is filled by E200. D278 provides a ligand contact to Zn(2+). A substrate-binding site is contributed by D279.

The protein belongs to the metallo-dependent hydrolases superfamily. Adenosine and AMP deaminases family. Adenosine deaminase subfamily. Zn(2+) is required as a cofactor.

It catalyses the reaction adenosine + H2O + H(+) = inosine + NH4(+). The catalysed reaction is 2'-deoxyadenosine + H2O + H(+) = 2'-deoxyinosine + NH4(+). In terms of biological role, catalyzes the hydrolytic deamination of adenosine and 2-deoxyadenosine. The protein is Adenosine deaminase of Erwinia tasmaniensis (strain DSM 17950 / CFBP 7177 / CIP 109463 / NCPPB 4357 / Et1/99).